Reading from the N-terminus, the 66-residue chain is uncharacterized protein (66 aa).

The hydrophobic stretch occupies residues 1–20 (MIALAYLATVAIAAMVLAVA).

This is an uncharacterized protein from Streptomyces lividans.